Consider the following 1891-residue polypeptide: TATA-binding protein-associated factor mot1 (1891 aa).

The stretch at 30–68 (PDELFNLLGRILPYLRSKSWDTRAAAAKAIGLIVANADT) is one HEAT 1 repeat. Disordered stretches follow at residues 184-216 (FVAS…LSKR), 241-283 (LSSR…LDRS), and 295-316 (FKGA…EGPN). Positions 264 to 275 (ENGEERNGDSKP) are enriched in basic and acidic residues. HEAT repeat units lie at residues 473–511 (SKLM…EFVK) and 569–606 (SSFG…LEGE). Over residues 699–710 (SAAAPARSSPAS) the composition is skewed to low complexity. The tract at residues 699-740 (SAAAPARSSPASNTPEGTKGRRRKSEKKEAPPPSAHNVDGHM) is disordered. HEAT repeat units follow at residues 957 to 996 (PKKP…YYTT), 1139 to 1177 (YPWV…VITV), 1181 to 1216 (TMLV…VMED), and 1219 to 1257 (LPYV…LVPL). A Helicase ATP-binding domain is found at 1316-1489 (AFLNRYNLHG…WSLFDFLMPG (174 aa)). An ATP-binding site is contributed by 1329-1336 (DDMGLGKT). The DEAH box signature appears at 1440-1443 (DEGH). The HEAT 8 repeat unit spans residues 1526-1565 (EALHKQVLPFLLRRLKEEVLNDLPPKIIQNYYCDPSELQR). A Helicase C-terminal domain is found at 1663–1813 (DLSGASYVSP…STVVNQQNAG (151 aa)).

This sequence belongs to the SNF2/RAD54 helicase family. In terms of assembly, forms the NCT transcriptional regulatory complex with nctA and nctB.

It is found in the nucleus. Functionally, regulates transcription in association with TATA binding protein (TBP). Removes TBP from the TATA box via its C-terminal ATPase activity. Both transcription activation and repression require its ATPase activity. Part of the NCT transcriptional regulatory complex that acts as a key regulator of ergosterol biosynthesis and the azole exporter cdr1B. The NCT complex binds the promoters of genes linked to azole susceptibility, and especially represses the expression of cdr1B transporter. The polypeptide is TATA-binding protein-associated factor mot1 (Aspergillus fumigatus (strain ATCC MYA-4609 / CBS 101355 / FGSC A1100 / Af293) (Neosartorya fumigata)).